Consider the following 148-residue polypeptide: uncharacterized protein (148 aa).

This is an uncharacterized protein from Pyrococcus woesei.